A 425-amino-acid chain; its full sequence is Putative type I restriction enzyme MjaX specificity subunit (425 aa).

It belongs to the type-I restriction system S methylase family.

Its function is as follows. A putative specificity (S) subunit of a type I restriction enzyme thought to recognize 5'-TAGN(6)TGC-3'; the other subunits are unknown. This is Putative type I restriction enzyme MjaX specificity subunit from Methanocaldococcus jannaschii (strain ATCC 43067 / DSM 2661 / JAL-1 / JCM 10045 / NBRC 100440) (Methanococcus jannaschii).